The primary structure comprises 308 residues: Baculoviral IAP repeat-containing protein bir-2 (308 aa).

BIR repeat units lie at residues 27–98 (RFAS…EFVM) and 170–241 (RLAT…DFIK). Cysteine 68, cysteine 71, histidine 87, cysteine 94, cysteine 211, cysteine 214, histidine 230, and cysteine 237 together coordinate Zn(2+).

Belongs to the IAP family.

This Caenorhabditis elegans protein is Baculoviral IAP repeat-containing protein bir-2.